A 318-amino-acid chain; its full sequence is Type II methyltransferase M.HaeII (318 aa).

One can recognise an SAM-dependent MTase C5-type domain in the interval Tyr4–Ala304. The active site involves Cys73.

It belongs to the class I-like SAM-binding methyltransferase superfamily. C5-methyltransferase family.

The enzyme catalyses a 2'-deoxycytidine in DNA + S-adenosyl-L-methionine = a 5-methyl-2'-deoxycytidine in DNA + S-adenosyl-L-homocysteine + H(+). A methylase, recognizes the double-stranded sequence 5'-RGCGCY-3', methylates C-? on both strands, and protects the DNA from cleavage by the HaeII endonuclease. This is Type II methyltransferase M.HaeII (haeIIM) from Haemophilus aegyptius.